We begin with the raw amino-acid sequence, 437 residues long: Cytochrome c biogenesis protein Ccs1 (437 aa).

Transmembrane regions (helical) follow at residues 23–43 (LQFS…GTII), 82–102 (TWWF…CSLS), and 168–188 (LAPI…VLGL).

Belongs to the Ccs1/CcsB family. In terms of assembly, may interact with CcsA.

It localises to the plastid. The protein localises to the chloroplast thylakoid membrane. Functionally, required during biogenesis of c-type cytochromes (cytochrome c6 and cytochrome f) at the step of heme attachment. In Porphyra purpurea (Red seaweed), this protein is Cytochrome c biogenesis protein Ccs1.